The primary structure comprises 252 residues: uncharacterized protein (252 aa).

Ser195 and Ser209 each carry phosphoserine.

In terms of tissue distribution, testis-specific. Highly expressed in spermatocytes (at protein level).

Its function is as follows. Essential for normal spermatogenesis and male fertility. This is an uncharacterized protein from Mus musculus (Mouse).